The primary structure comprises 350 residues: Twinfilin-1 (350 aa).

The residue at position 2 (Ser2) is an N-acetylserine. Residues Ser2 to Leu139 enclose the ADF-H 1 domain. Residues Ser143 and Ser277 each carry the phosphoserine modification. The 137-residue stretch at Gly177 to His313 folds into the ADF-H 2 domain. Phosphotyrosine is present on Tyr309. The tract at residues Gln316–Glu350 is disordered. Thr349 bears the Phosphothreonine mark.

The protein belongs to the actin-binding proteins ADF family. Twinfilin subfamily. As to quaternary structure, interacts with G-actin; ADP-actin form and capping protein (CP). May also be able to interact with TWF2 and phosphoinositides, PI(4,5)P2. When bound to PI(4,5)P2, it is down-regulated. Interacts with ACTG1. Post-translationally, phosphorylated on serine and threonine residues.

Its subcellular location is the cytoplasm. It is found in the cytoskeleton. Actin-binding protein involved in motile and morphological processes. Inhibits actin polymerization, likely by sequestering G-actin. By capping the barbed ends of filaments, it also regulates motility. Seems to play an important role in clathrin-mediated endocytosis and distribution of endocytic organelles. This is Twinfilin-1 (TWF1) from Bos taurus (Bovine).